The primary structure comprises 466 residues: Asparagine--tRNA ligase (466 aa).

The protein belongs to the class-II aminoacyl-tRNA synthetase family. Homodimer.

The protein resides in the cytoplasm. It catalyses the reaction tRNA(Asn) + L-asparagine + ATP = L-asparaginyl-tRNA(Asn) + AMP + diphosphate + H(+). The polypeptide is Asparagine--tRNA ligase (Vibrio vulnificus (strain YJ016)).